A 686-amino-acid chain; its full sequence is Heat shock 70 kDa protein 12B (686 aa).

Residues 12-53 (LYIGSSPERSPVPSPPGSPRTQESCGIAPLTPSQSPKPEVRA) form a disordered region. A phosphoserine mark is found at Ser25 and Ser29. Thr42 is modified (phosphothreonine). Phosphoserine occurs at positions 44, 46, and 276.

The protein belongs to the heat shock protein 70 family. As to expression, highest expression in muscle and heart. Lower levels in liver and kidney.

The protein is Heat shock 70 kDa protein 12B (HSPA12B) of Homo sapiens (Human).